We begin with the raw amino-acid sequence, 527 residues long: Metal transporter Nramp6 (527 aa).

12 helical membrane passes run 38-58 (FFSYLGPGFLVSIAYIDPGNF), 71-91 (ELLWIILVASCAALVIQSLAA), 115-135 (FMLWVVAEIAVVACDIPEVIG), 143-163 (LFNIPVWIGVLLTGLSTLILL), 173-193 (LEFLIAFLVFTIALCFFVELH), 221-241 (ISLLGAMVMPHNLFLHSALVL), 264-284 (GLALMVAFLINVSVISVSGAV), 321-341 (LFAIALLASGQSSTITGTYAG), 364-384 (CLAIIPSLIVALIGGSAGAGK), 385-405 (LIIIASMILSFELPFALVPLL), 427-447 (TWIIGGLIMGINIYYLVSSFI), and 458-478 (VAIVFLGVLGFSGIATYLAAI).

Belongs to the NRAMP (TC 2.A.55) family. As to expression, expressed in the vascular bundles of shoots, cotyledons, young leaves, sepals and petals, at the top of the flower stem and in the style. Expressed in the peduncle of developing siliques as well as in the septum and the funiculi.

The protein localises to the endomembrane system. Functionally, probable intracellular cadmium (Cd) transporter that participates in the distribution or availability of Cd within the cell. The sequence is that of Metal transporter Nramp6 (NRAMP6) from Arabidopsis thaliana (Mouse-ear cress).